The chain runs to 394 residues: 4-hydroxyphenylpyruvate dioxygenase (394 aa).

VOC domains follow at residues 18–149 (SFHH…LLEY) and 181–339 (FIDH…IFTK). The Fe cation site is built by His-184, His-267, and Glu-350.

This sequence belongs to the 4HPPD family. Homodimer. It depends on Fe cation as a cofactor.

It localises to the cytoplasm. Its subcellular location is the endoplasmic reticulum membrane. The protein localises to the golgi apparatus membrane. It carries out the reaction 3-(4-hydroxyphenyl)pyruvate + O2 = homogentisate + CO2. It participates in amino-acid degradation; L-phenylalanine degradation; acetoacetate and fumarate from L-phenylalanine: step 3/6. Its function is as follows. Catalyzes the conversion of 4-hydroxyphenylpyruvic acid to homogentisic acid, one of the steps in tyrosine catabolism. This chain is 4-hydroxyphenylpyruvate dioxygenase (hpd), found in Xenopus tropicalis (Western clawed frog).